The following is a 323-amino-acid chain: Cell division protein ZipA (323 aa).

The Periplasmic portion of the chain corresponds to 1–5 (MQELR). The chain crosses the membrane as a helical span at residues 6–26 (FVLIVVGALAIAALLFHGLWT). Residues 27–323 (SKKEGKAKFG…QIVEFNAANA (297 aa)) are Cytoplasmic-facing. The disordered stretch occupies residues 35-92 (FGNKPLGKLDVDQEDKDTPGQERDFAPDPEDDFEIIRKDRKEPDFGMENSFDNKFSSD). Basic and acidic residues-rich tracts occupy residues 41 to 60 (GKLDVDQEDKDTPGQERDFA) and 68 to 78 (EIIRKDRKEPD).

Belongs to the ZipA family. As to quaternary structure, interacts with FtsZ via their C-terminal domains.

It is found in the cell inner membrane. Its function is as follows. Essential cell division protein that stabilizes the FtsZ protofilaments by cross-linking them and that serves as a cytoplasmic membrane anchor for the Z ring. Also required for the recruitment to the septal ring of downstream cell division proteins. The protein is Cell division protein ZipA of Vibrio campbellii (strain ATCC BAA-1116).